Consider the following 480-residue polypeptide: MKNKEKYLTNFSEAKRKEATQKYNIIKPFILGKQSLSSISKSKGIALSTLYRWNKLYKEQGLTGLIHNTRVDKGEHKLKQNIIDEIKRLALKNKRNSIATIHRKIANYCIENNFYKPSYKQVYSIIKAMPKSVIDFSHQGEKYYQNKYDLIQIRESSRPNEIWQADHTLLDIYILDQKGNINRPWLTIIMDDYSRAIAGYFISFDAPNAQNTALTLHQAIWNKNNTNWPVCGIPEKFYTDHGSDFTSHHMEQVAIDLKINLMFSKVGVPRGRGKIERFFQTVNQTFLEQLPGYINNNDTSSDLIDFQNFEEKLRYFLIEDYNQKEHSAIQSTPINRWNSNHFFPNMPSSLEQLDLLLLEIPKSRKIHSDGIHFQGFRYSNTNLTAYVGEYVLIRYNPNDMAEIRVFYRDEFLCTAISPDLADYSIDIKEIQHARSQRRKHLKQNIASPSTTDLIKEEKSYGYSPQETTKNVKKLKRYRND.

Residues 36–55 constitute a DNA-binding region (H-T-H motif); it reads LSSISKSKGIALSTLYRWNK. The Integrase catalytic domain maps to 155-341; sequence ESSRPNEIWQ…TPINRWNSNH (187 aa). Residues 438–480 form a disordered region; sequence RKHLKQNIASPSTTDLIKEEKSYGYSPQETTKNVKKLKRYRND. Positions 470–480 are enriched in basic residues; the sequence is NVKKLKRYRND.

This is Transposase for transposon Tn552 from Staphylococcus aureus.